Reading from the N-terminus, the 160-residue chain is Probable NADH dehydrogenase [ubiquinone] 1 beta subcomplex subunit 2, mitochondrial (160 aa).

This sequence belongs to the complex I NDUFB2 subunit family. Complex I is composed of 45 different subunits.

It is found in the mitochondrion inner membrane. Its function is as follows. Accessory subunit of the mitochondrial membrane respiratory chain NADH dehydrogenase (Complex I), that is believed not to be involved in catalysis. Complex I functions in the transfer of electrons from NADH to the respiratory chain. The immediate electron acceptor for the enzyme is believed to be ubiquinone. The chain is Probable NADH dehydrogenase [ubiquinone] 1 beta subcomplex subunit 2, mitochondrial from Caenorhabditis briggsae.